A 1467-amino-acid polypeptide reads, in one-letter code: MYSSSNSFLGGVNNARPGQPPFMQQPPYSQLPQGQQQIPQQTGFQPQPTGYGSQSASHLQPQPTGFPTGQLQPQFTGFPGAAPPQQQQQFGGYQAPAQQPQLTGYPPQSQPPSLQVPSTTGLPTRLAPRTSSEIANSFSDGAGVAPPPPPKSSGSKIPNIRLSFITAQDQAKFEQLFKSAVGDSQTMDGEKAKELLLRSRLPGSELSKIWVLSDTTKSGQLFFPEFALAMYLCNLRITGRELPSTLPDKIKNEVSGMVDIISFGVPDTEPQGAARTNVPSFDAPLLENKSAPPAPQHPKPQQPSNAQFLSQLAAQPTGFGPQATGLQPNQPSLLGANATLAPQTTGFPGQSQQQYLHSQPTGLMTNPQATGYNGPRPPLPPMPTGFGSNLSSMQTGGLAAQPTGIPGQWGFVNAPSSGLPNIEALKQQLMPQPGREGGFTTAGLSGNASIPWAITKEEKKIYDDLFRAWDGLHKGFIGGDTAIEIMGQSGLDRKDLERIWTLADPNNRGRLNMDEFAVAMHLIYRKLNGYPVPNRLPPELIPPSTRNLNDSIGAVKSLLSQDAESRKASGAFLQPQKTGVSYLKEHSFRGGARSPGFGRKDATLFKNNDEAAAGYRSSARRRVGNDARPSSPPTSQASEEELSVEQLKKKIRETQIMLDAVDFKDENRAEEDEVLDRRDRLEAESLMDRTRRVQDDIDTHPNAVFRKLDNGAERRSLRRQLQAFEDQVPQIASEVRRIEREIADAKLELFRLKDAKAHPNSAANIVGTGPGGTVTEADRIKARARARMQARAAELAGRPVPASVDDDGAAVRRLEAESASIRADREKNEAMTRDVEESVREFTRSLEDSLKEEGETSTREHERRRWEDALGVEDVIRDFIYDLQRGSRTAHIRKEEESRASAQEQRLRHEEPSPGVSRLSPAPSAGSAGSLPGSTHEDRVAAARERAQRRIAERMAAAGLKPHTDTSETLLQRQEREKREREERLRRAEEEDAKREQERQRRLAEEQRSTSDTPAKPVGKKPPPAPPSRRGRTDSAGQAEVKKAAEETITAEQAAREQAIREEQQAQEEETNRLEMEAQKREEELLKEKEAQEARLRALEEQVRQGKIRKQEEKRRKEEAERLAKEKEAALAAQRAEIERAKERERQLQLELERLDEESSSDDEGPVNITPEDSTPTQSQLLPTVTPAAPVSAPESEQAGSPEDTSSQAPPVDFKLETESKNPYFKITHQATDTQVVSSPPVPQPSFTSPKADVHSTNPFHRLAKQETSKPAFTGSAPLERKSRARPEADDDWSAAGSEFDSSDDDDDERPGGGSAKQLASILFGTMAPPRPLSAMDDKSPSKSSTPVQDSPVASLPVPESNGSLSAPAAPPPPPPPPPAAVPSYDPSVAPPPPPAPPMAPPAPPPGPPPPPGPPPPPAPPAASGPPTPAGAPDRSALLASIQKGKGLRKVQTNDRSTSSIAGRVLD.

The disordered stretch occupies residues 1–157; it reads MYSSSNSFLG…PPPKSSGSKI (157 aa). The span at 25-48 shows a compositional bias: low complexity; that stretch reads QPPYSQLPQGQQQIPQQTGFQPQP. Residues 50-75 are compositionally biased toward polar residues; it reads GYGSQSASHLQPQPTGFPTGQLQPQF. A compositionally biased stretch (low complexity) spans 77–101; the sequence is GFPGAAPPQQQQQFGGYQAPAQQPQ. Residues 129-139 show a composition bias toward polar residues; the sequence is RTSSEIANSFS. Residues 169–257 enclose the EH 1 domain; sequence DQAKFEQLFK…DKIKNEVSGM (89 aa). In terms of domain architecture, EF-hand 1 spans 201-236; it reads LPGSELSKIWVLSDTTKSGQLFFPEFALAMYLCNLR. The disordered stretch occupies residues 266 to 376; the sequence is PDTEPQGAAR…PQATGYNGPR (111 aa). Positions 292-301 are enriched in pro residues; the sequence is PPAPQHPKPQ. 2 stretches are compositionally biased toward polar residues: residues 305–314 and 340–370; these read NAQFLSQLAA and LAPQ…PQAT. Positions 458–547 constitute an EH 2 domain; sequence EKKIYDDLFR…PELIPPSTRN (90 aa). An EF-hand 2 domain is found at 491–526; that stretch reads LDRKDLERIWTLADPNNRGRLNMDEFAVAMHLIYRK. Disordered regions lie at residues 613 to 643, 822 to 864, 888 to 1087, and 1101 to 1467; these read AGYR…EELS, RADR…HERR, RTAH…ELLK, and EQVR…RVLD. The stretch at 634-758 forms a coiled coil; the sequence is TSQASEEELS…LFRLKDAKAH (125 aa). Residues 892-912 show a composition bias toward basic and acidic residues; it reads IRKEEESRASAQEQRLRHEEP. The span at 919 to 934 shows a compositional bias: low complexity; that stretch reads LSPAPSAGSAGSLPGS. 5 stretches are compositionally biased toward basic and acidic residues: residues 935–953, 973–1009, 1054–1087, 1101–1129, and 1136–1153; these read THED…RIAE, RQER…EQRS, AARE…ELLK, EQVR…EKEA, and AEIE…LELE. The stretch at 965–1162 forms a coiled coil; that stretch reads DTSETLLQRQ…ERLDEESSSD (198 aa). Residues 1154 to 1165 are compositionally biased toward acidic residues; the sequence is RLDEESSSDDEG. Residues 1171–1182 show a composition bias toward polar residues; it reads PEDSTPTQSQLL. Low complexity predominate over residues 1183–1197; it reads PTVTPAAPVSAPESE. Over residues 1279 to 1288 the composition is skewed to basic and acidic residues; the sequence is LERKSRARPE. Pro residues-rich tracts occupy residues 1369-1381 and 1389-1430; these read AAPP…PPAA and VAPP…PTPA. In terms of domain architecture, WH2 spans 1434-1451; it reads DRSALLASIQKGKGLRKV.

It belongs to the PAN1 family. In terms of assembly, component of the PAN1 actin cytoskeleton-regulatory complex.

The protein localises to the cell membrane. The protein resides in the endosome membrane. It localises to the cytoplasm. Its subcellular location is the cytoskeleton. It is found in the actin patch. Its function is as follows. Component of the PAN1 actin cytoskeleton-regulatory complex required for the internalization of endosomes during actin-coupled endocytosis. The complex links the site of endocytosis to the cell membrane-associated actin cytoskeleton. Mediates uptake of external molecules and vacuolar degradation of plasma membrane proteins. Plays a role in the proper organization of the cell membrane-associated actin cytoskeleton and promotes its destabilization. This chain is Actin cytoskeleton-regulatory complex protein pan1 (pan1), found in Aspergillus fumigatus (strain CBS 144.89 / FGSC A1163 / CEA10) (Neosartorya fumigata).